We begin with the raw amino-acid sequence, 157 residues long: Peptide methionine sulfoxide reductase MsrA (157 aa).

The active site involves cysteine 10.

Belongs to the MsrA Met sulfoxide reductase family.

The catalysed reaction is L-methionyl-[protein] + [thioredoxin]-disulfide + H2O = L-methionyl-(S)-S-oxide-[protein] + [thioredoxin]-dithiol. It carries out the reaction [thioredoxin]-disulfide + L-methionine + H2O = L-methionine (S)-S-oxide + [thioredoxin]-dithiol. Has an important function as a repair enzyme for proteins that have been inactivated by oxidation. Catalyzes the reversible oxidation-reduction of methionine sulfoxide in proteins to methionine. The polypeptide is Peptide methionine sulfoxide reductase MsrA (Clostridium botulinum (strain Loch Maree / Type A3)).